Reading from the N-terminus, the 110-residue chain is Large ribosomal subunit protein uL24 (110 aa).

The protein belongs to the universal ribosomal protein uL24 family. In terms of assembly, part of the 50S ribosomal subunit.

In terms of biological role, one of two assembly initiator proteins, it binds directly to the 5'-end of the 23S rRNA, where it nucleates assembly of the 50S subunit. One of the proteins that surrounds the polypeptide exit tunnel on the outside of the subunit. The chain is Large ribosomal subunit protein uL24 from Thermus thermophilus (strain ATCC BAA-163 / DSM 7039 / HB27).